Consider the following 383-residue polypeptide: Homoserine O-succinyltransferase (383 aa).

The region spanning 51–361 (NALLICHALS…ESDFGHDAFL (311 aa)) is the AB hydrolase-1 domain. Ser-157 serves as the catalytic Nucleophile. Arg-227 lines the substrate pocket. Catalysis depends on residues Asp-324 and His-357. Asp-358 is a binding site for substrate.

The protein belongs to the AB hydrolase superfamily. MetX family. In terms of assembly, homodimer.

The protein resides in the cytoplasm. It carries out the reaction L-homoserine + succinyl-CoA = O-succinyl-L-homoserine + CoA. It participates in amino-acid biosynthesis; L-methionine biosynthesis via de novo pathway; O-succinyl-L-homoserine from L-homoserine: step 1/1. Transfers a succinyl group from succinyl-CoA to L-homoserine, forming succinyl-L-homoserine. The polypeptide is Homoserine O-succinyltransferase (Teredinibacter turnerae (strain ATCC 39867 / T7901)).